A 442-amino-acid polypeptide reads, in one-letter code: 5-methylthioadenosine/S-adenosylhomocysteine deaminase (442 aa).

His-72 and His-74 together coordinate Zn(2+). Residues Glu-101 and His-194 each coordinate substrate. His-221 provides a ligand contact to Zn(2+). Residues Glu-224 and Asp-309 each contribute to the substrate site. Position 309 (Asp-309) interacts with Zn(2+).

Belongs to the metallo-dependent hydrolases superfamily. MTA/SAH deaminase family. The cofactor is Zn(2+).

The catalysed reaction is S-adenosyl-L-homocysteine + H2O + H(+) = S-inosyl-L-homocysteine + NH4(+). It catalyses the reaction S-methyl-5'-thioadenosine + H2O + H(+) = S-methyl-5'-thioinosine + NH4(+). Its function is as follows. Catalyzes the deamination of 5-methylthioadenosine and S-adenosyl-L-homocysteine into 5-methylthioinosine and S-inosyl-L-homocysteine, respectively. Is also able to deaminate adenosine. The sequence is that of 5-methylthioadenosine/S-adenosylhomocysteine deaminase from Teredinibacter turnerae (strain ATCC 39867 / T7901).